A 212-amino-acid chain; its full sequence is Regulator of G-protein signaling 2 (212 aa).

Disordered stretches follow at residues 11–33 (HDCG…REKM) and 48–69 (FLQN…PQTF). The segment at 32-66 (KMKRTLLKDWKTRLSYFLQNSSSPGKPKTGKKSKP) is necessary for membrane association. A necessary to inhibit protein synthesis region spans residues 79-116 (LWAEAFDELLASKYGLAAFRAFLKSEFCEENIEFWLAC). In terms of domain architecture, RGS spans 83-199 (AFDELLASKY…LESEFYQDLC (117 aa)).

As to quaternary structure, interacts with GNAQ. Does not interact with GNAI1 and GNAI3. Interacts with EIF2B5. Interacts with PRKG1 (isoform alpha). Phosphorylated by protein kinase C. Phosphorylation by PRKG1 leads to activation of RGS2 activity.

It is found in the cell membrane. Its subcellular location is the cytoplasm. It localises to the nucleus. The protein localises to the nucleolus. Its function is as follows. Regulates G protein-coupled receptor signaling cascades. Inhibits signal transduction by increasing the GTPase activity of G protein alpha subunits, thereby driving them into their inactive GDP-bound form. It is involved in the negative regulation of the angiotensin-activated signaling pathway. Plays a role in the regulation of blood pressure in response to signaling via G protein-coupled receptors and GNAQ. Plays a role in regulating the constriction and relaxation of vascular smooth muscle. Binds EIF2B5 and blocks its activity, thereby inhibiting the translation of mRNA into protein. This Sus scrofa (Pig) protein is Regulator of G-protein signaling 2 (RGS2).